The chain runs to 588 residues: Probable basic-leucine zipper transcription factor M (588 aa).

Residues 127 to 157 (QVEQQQEQEQEQEQQQKQQQQQYIEKQIQEI) are a coiled coil. The span at 221–240 (QQNHIDNQSLNNSNTKTSKN) shows a compositional bias: low complexity. The segment at 221–250 (QQNHIDNQSLNNSNTKTSKNQQKDNNLPKK) is disordered. Residues 263 to 326 (NNNNIEKKRD…GSNLMRPEPE (64 aa)) form the bZIP domain. Residues 269-289 (KKRDQTESSKNFREKKKEYVK) form a basic motif region. The tract at residues 291–312 (IESKILALTLENDKLKKENDSL) is leucine-zipper.

It belongs to the bZIP family.

The protein localises to the nucleus. In terms of biological role, probable transcriptional regulator. This is Probable basic-leucine zipper transcription factor M (bzpM) from Dictyostelium discoideum (Social amoeba).